The sequence spans 245 residues: tRNA (guanine-N(1)-)-methyltransferase (245 aa).

Residues Gly-111 and 131-136 (IGDYVL) each bind S-adenosyl-L-methionine.

The protein belongs to the RNA methyltransferase TrmD family. As to quaternary structure, homodimer.

It is found in the cytoplasm. The enzyme catalyses guanosine(37) in tRNA + S-adenosyl-L-methionine = N(1)-methylguanosine(37) in tRNA + S-adenosyl-L-homocysteine + H(+). Functionally, specifically methylates guanosine-37 in various tRNAs. The sequence is that of tRNA (guanine-N(1)-)-methyltransferase from Staphylococcus carnosus (strain TM300).